The following is a 434-amino-acid chain: MNYVTFNQDYSCLAVGTAKGFRIYHTEPFSKIFTGDNENVTIIEMLFSTSLVAIKQSPRHIVIQNTKRGTVICELTFPSAVLAVRLNRKRFAVLLEEEIYLYDIQNMGLLYTISTSANPNAICSLSASSDNCYLAYPLPKPREETGDKRPAHAPPLSPYVAPTSGEVLIFDAKSLKAVNVIEAHRAPLSCIALNNDGTLLATASETGTIIRVFSVPDGQKLYQFRRGTYPSSIFSLSFNMSSTLLCVSSNSDTIHIFRLGGPVTGLPESPQSPGDKDKWRRSRSFDSENGSPPAGISPGSEMADVPAEKSKSSGTFGSMIRRSSQMVGKGVAGVVGGYLPQAVTEMWEPARDFAFIKLPKGGMGVTPRSGPVKSVVAMSSSSPQVMVVTSDGGFYIYSIDMETGGEGVLVKQYSVLESDDSLEPPPINYVSYRT.

WD repeat units lie at residues 1-34, 183-223, and 228-267; these read MNYV…KIFT, AHRA…KLYQ, and TYPS…TGLP. Positions 224–228 match the L/FRRG motif motif; the sequence is FRRGT. The tract at residues 262–318 is disordered; it reads PVTGLPESPQSPGDKDKWRRSRSFDSENGSPPAGISPGSEMADVPAEKSKSSGTFGS. A compositionally biased stretch (basic and acidic residues) spans 274–286; that stretch reads GDKDKWRRSRSFD. Residues 367-407 form a WD 4 repeat; it reads PRSGPVKSVVAMSSSSPQVMVVTSDGGFYIYSIDMETGGEG.

It belongs to the WD repeat PROPPIN family. As to quaternary structure, component of the PI(3,5)P2 regulatory complex.

Its subcellular location is the preautophagosomal structure membrane. It is found in the vacuole membrane. The protein localises to the endosome membrane. Functionally, the PI(3,5)P2 regulatory complex regulates both the synthesis and turnover of phosphatidylinositol 3,5-bisphosphate (PtdIns(3,5)P2). Necessary for proper vacuole morphology. Plays an important role in osmotically-induced vacuole fragmentation. Required for cytoplasm to vacuole transport (Cvt) vesicle formation, pexophagy and starvation-induced autophagy. Involved in correct atg9 trafficking to the pre-autophagosomal structure. Might also be involved in premeiotic DNA replication. This chain is Autophagy-related protein 18 (atg18), found in Botryotinia fuckeliana (strain B05.10) (Noble rot fungus).